We begin with the raw amino-acid sequence, 372 residues long: GDP-mannose 4,6-dehydratase (372 aa).

NADP(+) contacts are provided by residues 9-14 (GVTGQD), 64-65 (DL), 86-90 (LGAQS), and Tyr-101. Thr-133 is a catalytic residue. Residues Glu-135 and Tyr-157 each act as nucleophile in the active site. Lys-161, His-187, and Arg-192 together coordinate NADP(+).

This sequence belongs to the NAD(P)-dependent epimerase/dehydratase family. GDP-mannose 4,6-dehydratase subfamily. The cofactor is NADP(+).

It carries out the reaction GDP-alpha-D-mannose = GDP-4-dehydro-alpha-D-rhamnose + H2O. The protein operates within nucleotide-sugar biosynthesis; GDP-L-fucose biosynthesis via de novo pathway; GDP-L-fucose from GDP-alpha-D-mannose: step 1/2. Functionally, catalyzes the conversion of GDP-D-mannose to GDP-4-dehydro-6-deoxy-D-mannose. In Vibrio cholerae, this protein is GDP-mannose 4,6-dehydratase.